The following is an 80-amino-acid chain: MRLVVCLVYLVSFALVCQGQGFKGGYTGSYSRAPPYGSRGPISTHPISRPATGCTSCHTITFDKAACCRLFGRCCSALKG.

Positions 1-19 (MRLVVCLVYLVSFALVCQG) are cleaved as a signal peptide. Position 20 is a pyrrolidone carboxylic acid (Gln20). Disulfide bonds link Cys54–Cys67, Cys57–Cys74, and Cys68–Cys75.

Belongs to the penaeidin family. Post-translationally, the N-terminus forms pyrrolidone carboxylic acid. As to expression, strongly expressed in hemocytes, and to a lesser extent in heart, muscle, gills, intestine and eyestalk. Lowest expression in hepatopancreas.

It is found in the cytoplasmic granule. Its function is as follows. Antibacterial and antifungal activity. Presents chitin-binding activity. In Penaeus indicus (Indian white prawn), this protein is Penaeidin-3.